A 44-amino-acid chain; its full sequence is Protein PsbN (44 aa).

A helical membrane pass occupies residues 6-26; that stretch reads FFFTIFLWFFLLSITAYSIYV.

It belongs to the PsbN family.

It localises to the plastid. The protein resides in the chloroplast thylakoid membrane. Its function is as follows. May play a role in photosystem I and II biogenesis. The polypeptide is Protein PsbN (Stigeoclonium helveticum (Green alga)).